We begin with the raw amino-acid sequence, 439 residues long: MAEAKIEEIGCEDRISVLPEDLLVVILDLLPTKDVVATMILSKRWLSIWTMVRTLEYTDDMDDESKKSVWWFLNKSLQLHKAPVIDSLCMELGPQCPTTDDVDIGKWVAKAVDCLVMTLTIKLLWSAGPTSLPKSLYSCTSLSELTLSDQILVNVPSSAYLPSLTELELICVVYKDEDSLVSFLSSCPVLEFLFVLRKIDDNVKTFTVKVPSLLELTYKNLCSDVVDNTDRCLVVNAPAVNTCQITDYSLESFSIEDMPCLQDATIDVDEAYHPDDKFLTSFSSVLSLRMHLSDAMVMRCTTINFSRLIKLSIYPYGPDMLETLLRLLGNAPKLKEFLVDYPSLIASQKFVYNPEDLPWSWKQPSHVPECLSSQLEIFEWRDYGDRIIEEEFLTYVLANSKRLKTATISLRLNLEDPELIIEEIKDLPRVSTTSHLLFK.

Positions 12 to 58 (EDRISVLPEDLLVVILDLLPTKDVVATMILSKRWLSIWTMVRTLEYT) constitute an F-box domain. One can recognise an FBD domain in the interval 360–410 (SWKQPSHVPECLSSQLEIFEWRDYGDRIIEEEFLTYVLANSKRLKTATISL).

In Arabidopsis thaliana (Mouse-ear cress), this protein is Putative FBD-associated F-box protein At1g05080.